Reading from the N-terminus, the 172-residue chain is Large ribosomal subunit protein uL10 (172 aa).

This sequence belongs to the universal ribosomal protein uL10 family. As to quaternary structure, part of the ribosomal stalk of the 50S ribosomal subunit. The N-terminus interacts with L11 and the large rRNA to form the base of the stalk. The C-terminus forms an elongated spine to which L12 dimers bind in a sequential fashion forming a multimeric L10(L12)X complex.

Forms part of the ribosomal stalk, playing a central role in the interaction of the ribosome with GTP-bound translation factors. This Parvibaculum lavamentivorans (strain DS-1 / DSM 13023 / NCIMB 13966) protein is Large ribosomal subunit protein uL10.